The primary structure comprises 640 residues: 1-deoxy-D-xylulose-5-phosphate synthase (640 aa).

Thiamine diphosphate contacts are provided by residues His-79 and 120–122 (GHS). Mg(2+) is bound at residue Asp-151. Thiamine diphosphate is bound by residues 152 to 153 (GA), Asn-180, Tyr-287, and Glu-369. Residue Asn-180 coordinates Mg(2+).

Belongs to the transketolase family. DXPS subfamily. In terms of assembly, homodimer. Mg(2+) is required as a cofactor. It depends on thiamine diphosphate as a cofactor.

The enzyme catalyses D-glyceraldehyde 3-phosphate + pyruvate + H(+) = 1-deoxy-D-xylulose 5-phosphate + CO2. It participates in metabolic intermediate biosynthesis; 1-deoxy-D-xylulose 5-phosphate biosynthesis; 1-deoxy-D-xylulose 5-phosphate from D-glyceraldehyde 3-phosphate and pyruvate: step 1/1. Catalyzes the acyloin condensation reaction between C atoms 2 and 3 of pyruvate and glyceraldehyde 3-phosphate to yield 1-deoxy-D-xylulose-5-phosphate (DXP). The polypeptide is 1-deoxy-D-xylulose-5-phosphate synthase (Thioalkalivibrio sulfidiphilus (strain HL-EbGR7)).